The primary structure comprises 631 residues: Dolichyl-diphosphooligosaccharide--protein glycosyltransferase subunit 2 (631 aa).

An N-terminal signal peptide occupies residues 1–22; it reads MAPPGSSTVFLLALTIIASTWA. Topologically, residues 23 to 540 are lumenal; that stretch reads LTPTHYLTKH…REPEKRPPTV (518 aa). An N-linked (GlcNAc...) asparagine glycan is attached at asparagine 106. A Glycyl lysine isopeptide (Lys-Gly) (interchain with G-Cter in ubiquitin) cross-link involves residue lysine 154. Residues 541-561 form a helical membrane-spanning segment; that stretch reads VSNTFTALILSPLLLLFALWI. At 562-571 the chain is on the cytoplasmic side; it reads RIGANVSNFT. The chain crosses the membrane as a helical span at residues 572–592; sequence FAPSTIIFHLGHAAMLGLMYV. The Lumenal segment spans residues 593–596; sequence YWTQ. Residues 597–617 traverse the membrane as a helical segment; that stretch reads LNMFQTLKYLAILGSVTFLAG. The Cytoplasmic portion of the chain corresponds to 618-631; that stretch reads NRMLAQQAVKRTAH.

It belongs to the SWP1 family. As to quaternary structure, component of the oligosaccharyltransferase (OST) complex. OST exists in two different complex forms which contain common core subunits RPN1, RPN2, OST48, OST4, DAD1 and TMEM258, either STT3A or STT3B as catalytic subunits, and form-specific accessory subunits. STT3A complex assembly occurs through the formation of 3 subcomplexes. Subcomplex 1 contains RPN1 and TMEM258, subcomplex 2 contains the STT3A-specific subunits STT3A, DC2/OSTC, and KCP2 as well as the core subunit OST4, and subcomplex 3 contains RPN2, DAD1, and OST48. The STT3A complex can form stable complexes with the Sec61 complex or with both the Sec61 and TRAP complexes. Interacts with DDI2. Interacts with TMEM35A/NACHO. In terms of tissue distribution, expressed in all tissues tested.

Its subcellular location is the endoplasmic reticulum. The protein localises to the endoplasmic reticulum membrane. It participates in protein modification; protein glycosylation. Its function is as follows. Subunit of the oligosaccharyl transferase (OST) complex that catalyzes the initial transfer of a defined glycan (Glc(3)Man(9)GlcNAc(2) in eukaryotes) from the lipid carrier dolichol-pyrophosphate to an asparagine residue within an Asn-X-Ser/Thr consensus motif in nascent polypeptide chains, the first step in protein N-glycosylation. N-glycosylation occurs cotranslationally and the complex associates with the Sec61 complex at the channel-forming translocon complex that mediates protein translocation across the endoplasmic reticulum (ER). All subunits are required for a maximal enzyme activity. The chain is Dolichyl-diphosphooligosaccharide--protein glycosyltransferase subunit 2 from Homo sapiens (Human).